The following is a 325-amino-acid chain: Beta-ketoacyl-[acyl-carrier-protein] synthase III (325 aa).

Residues cysteine 119 and histidine 252 contribute to the active site. The interval 253 to 257 (QANIR) is ACP-binding. Asparagine 282 is an active-site residue.

This sequence belongs to the thiolase-like superfamily. FabH family. As to quaternary structure, homodimer.

The protein localises to the cytoplasm. It catalyses the reaction malonyl-[ACP] + acetyl-CoA + H(+) = 3-oxobutanoyl-[ACP] + CO2 + CoA. The protein operates within lipid metabolism; fatty acid biosynthesis. Its function is as follows. Catalyzes the condensation reaction of fatty acid synthesis by the addition to an acyl acceptor of two carbons from malonyl-ACP. Catalyzes the first condensation reaction which initiates fatty acid synthesis and may therefore play a role in governing the total rate of fatty acid production. Possesses both acetoacetyl-ACP synthase and acetyl transacylase activities. Its substrate specificity determines the biosynthesis of branched-chain and/or straight-chain of fatty acids. The polypeptide is Beta-ketoacyl-[acyl-carrier-protein] synthase III (Variovorax paradoxus (strain S110)).